The sequence spans 167 residues: Dimethylamine corrinoid protein 3 (167 aa).

The 44-residue stretch at 1–44 (MNEVGVRFERGKLFLPHVMMAADAMTAGVNALKDLMPEGSASSK) folds into the B12-binding N-terminal domain. Residues 45–167 (MGVIVNGTVE…AVTKAKELLA (123 aa)) enclose the B12-binding domain. His-58 contributes to the methylcob(III)alamin binding site.

The protein belongs to the methylamine corrinoid protein family.

Its pathway is one-carbon metabolism; methanogenesis from dimethylamine. Functionally, acts as a methyl group carrier between MtbB and MtbA. This chain is Dimethylamine corrinoid protein 3 (mtbC3), found in Methanosarcina mazei (strain ATCC BAA-159 / DSM 3647 / Goe1 / Go1 / JCM 11833 / OCM 88) (Methanosarcina frisia).